The following is an 85-amino-acid chain: MVVKIEVFTSPTCPYCPMAIEVVDEAKKEFGDKIDVEKIDIMVDREKAIDYGLMAVPAIAINGVVRFVGAPGREELFEAISDEIE.

A Glutaredoxin domain is found at 2 to 85 (VVKIEVFTSP…LFEAISDEIE (84 aa)). A disulfide bridge connects residues Cys13 and Cys16.

This sequence belongs to the glutaredoxin family.

It localises to the cytoplasm. In terms of biological role, does not function as a glutathione-disulfide oxidoreductase in the presence of glutathione and glutathione reductase. May be a component of a ribonucleotide-reducing system distinct from the previously described systems utilizing thioredoxin or glutaredoxin. This Methanothermobacter marburgensis (strain ATCC BAA-927 / DSM 2133 / JCM 14651 / NBRC 100331 / OCM 82 / Marburg) (Methanobacterium thermoautotrophicum) protein is Probable Thioredoxin.